We begin with the raw amino-acid sequence, 103 residues long: Pyrimidine/purine nucleoside phosphorylase (103 aa).

Belongs to the nucleoside phosphorylase PpnP family.

The enzyme catalyses a purine D-ribonucleoside + phosphate = a purine nucleobase + alpha-D-ribose 1-phosphate. It catalyses the reaction adenosine + phosphate = alpha-D-ribose 1-phosphate + adenine. It carries out the reaction cytidine + phosphate = cytosine + alpha-D-ribose 1-phosphate. The catalysed reaction is guanosine + phosphate = alpha-D-ribose 1-phosphate + guanine. The enzyme catalyses inosine + phosphate = alpha-D-ribose 1-phosphate + hypoxanthine. It catalyses the reaction thymidine + phosphate = 2-deoxy-alpha-D-ribose 1-phosphate + thymine. It carries out the reaction uridine + phosphate = alpha-D-ribose 1-phosphate + uracil. The catalysed reaction is xanthosine + phosphate = alpha-D-ribose 1-phosphate + xanthine. Catalyzes the phosphorolysis of diverse nucleosides, yielding D-ribose 1-phosphate and the respective free bases. Can use uridine, adenosine, guanosine, cytidine, thymidine, inosine and xanthosine as substrates. Also catalyzes the reverse reactions. The chain is Pyrimidine/purine nucleoside phosphorylase from Methylobacillus flagellatus (strain ATCC 51484 / DSM 6875 / VKM B-1610 / KT).